Here is a 253-residue protein sequence, read N- to C-terminus: tRNA pseudouridine synthase A (253 aa).

The Nucleophile role is filled by Asp53. Tyr112 contacts substrate.

This sequence belongs to the tRNA pseudouridine synthase TruA family. In terms of assembly, homodimer.

The catalysed reaction is uridine(38/39/40) in tRNA = pseudouridine(38/39/40) in tRNA. In terms of biological role, formation of pseudouridine at positions 38, 39 and 40 in the anticodon stem and loop of transfer RNAs. The protein is tRNA pseudouridine synthase A of Lactococcus lactis subsp. cremoris (strain SK11).